A 671-amino-acid polypeptide reads, in one-letter code: MSAGNGNATNGDGGFSFPKGPVMPKITTGAAKRGSGVCHDDSGPTVNATTIDELHSLQKKRSAPTTPINQNAAAAFAAVSEEERQKIQLQSISASLASLTRESGPKVVRGDPAEKKTDGSTTPAYAHGQHHSIFSPATGAVSDSSLKFTHVLYNLSPAELYEQAIKYEKGSFITSNGALATLSGAKTGRAPRDKRVVRDATTEDELWWGKGSPNIEMDEHTFMVNRERAVDYLNSLEKVFVNDQYLNWDPENRIKVRIVSARAYHSLFMHNMCIRPTQEELESFGTPDFTIYNAGQFPCNRYTHYMTSSTSVDLNLARREMVILGTQYAGEMKKGLFSVMHYLMPKRRILSLHSGCNMGKDGDVALFFGLSGTGKTTLSTDHNRYLIGDDEHCWTETGVSNIEGGCYAKCVDLSREKEPDIWNAIKFGTVLENVVFDEHTREVDYSDKSVTENTRAAYPIEFIPNAKIPCVGPHPTNVILLACDAFGVLPPVSKLNLAQTMYHFISGYTALVAGTEDGIKEPTATFSACFGAAFIMLHPTKYAAMLAEKMKSQGATGWLVNTGWSGGSYGVGNRIKLAYTRKIIDAIHSGSLLKANYKKTEIFGFEIPTEIEGIPSEILDPVNSWSDKKAHKDTLVKLGGLFKKNFEVFANHKIGVDGKLTEEILAAGPIF.

Positions 1–10 (MSAGNGNATN) are enriched in low complexity. Residues 1-44 (MSAGNGNATNGDGGFSFPKGPVMPKITTGAAKRGSGVCHDDSGP) form a disordered region. At Ser-2 the chain carries N-acetylserine. Phosphoserine is present on Ser-62. The residue at position 66 (Thr-66) is a Phosphothreonine. A disordered region spans residues 100 to 127 (TRESGPKVVRGDPAEKKTDGSTTPAYAH). A compositionally biased stretch (basic and acidic residues) spans 108 to 118 (VRGDPAEKKTD). Residue Arg-189 participates in substrate binding. His-270 and Asn-271 together coordinate Ca(2+). Substrate is bound by residues Tyr-328 and Lys-334. ATP is bound by residues Lys-334, His-353, and 369-377 (GLSGTGKTT). Residues Lys-334 and His-353 each contribute to the Mn(2+) site. Residue Asp-390 participates in Mn(2+) binding. Gly-404 is a Ca(2+) binding site. ATP is bound by residues Glu-418, Arg-455, 574–575 (RI), Ile-575, and Thr-580. Residue Arg-455 coordinates substrate.

It belongs to the phosphoenolpyruvate carboxykinase (ATP) family. As to quaternary structure, monomer. Mn(2+) is required as a cofactor. As to expression, expressed in cotyledons, flowers, siliques, seeds, leaves, stems and roots. Localized in mid-veins.

It localises to the cytoplasm. The catalysed reaction is oxaloacetate + ATP = phosphoenolpyruvate + ADP + CO2. Its pathway is carbohydrate biosynthesis; gluconeogenesis. With respect to regulation, allosterically activated by calcium. It may represent the only case of a monomeric, allosteric enzyme. Its function is as follows. Involved in the gluconeogenesis. Catalyzes the conversion of oxaloacetate (OAA) to phosphoenolpyruvate (PEP) through direct phosphoryl transfer between the nucleoside triphosphate and OAA. This Arabidopsis thaliana (Mouse-ear cress) protein is Phosphoenolpyruvate carboxykinase (ATP) 1.